We begin with the raw amino-acid sequence, 450 residues long: Methionine aminopeptidase 2 (450 aa).

The disordered stretch occupies residues 1-99 (MAVQAPEVDK…LFPNSQYPEG (99 aa)). Acidic residues predominate over residues 33–49 (GDEDAENEESDEDDDQG). The span at 60-75 (KKKRKRKPKKKKKKGV) shows a compositional bias: basic residues. His-200 serves as a coordination point for substrate. Residues Asp-220, Asp-231, and His-300 each contribute to the a divalent metal cation site. A substrate-binding site is contributed by His-308. Residues Glu-336 and Glu-431 each contribute to the a divalent metal cation site.

It belongs to the peptidase M24A family. Methionine aminopeptidase eukaryotic type 2 subfamily. Co(2+) serves as cofactor. It depends on Zn(2+) as a cofactor. The cofactor is Mn(2+). Fe(2+) is required as a cofactor.

It localises to the cytoplasm. It catalyses the reaction Release of N-terminal amino acids, preferentially methionine, from peptides and arylamides.. Functionally, cotranslationally removes the N-terminal methionine from nascent proteins. The N-terminal methionine is often cleaved when the second residue in the primary sequence is small and uncharged (Met-Ala-, Cys, Gly, Pro, Ser, Thr, or Val). The chain is Methionine aminopeptidase 2 from Uncinocarpus reesii (strain UAMH 1704).